The sequence spans 132 residues: Small ribosomal subunit protein uS8 (132 aa).

It belongs to the universal ribosomal protein uS8 family. In terms of assembly, part of the 30S ribosomal subunit. Contacts proteins S5 and S12.

One of the primary rRNA binding proteins, it binds directly to 16S rRNA central domain where it helps coordinate assembly of the platform of the 30S subunit. This Alkaliphilus metalliredigens (strain QYMF) protein is Small ribosomal subunit protein uS8.